We begin with the raw amino-acid sequence, 489 residues long: MAAEFIKSCCRGCLYGETEKQKFSVDRDFKASASSSQNTIGIPPLTSVLVKPQVGCNEDYLLSKLPCDGKEVQFVVPRFKLSYIQPRTQGIPSHLDELEGSARASFGDQKTELCSSFYHGPSYDVYNPCYMYQHFSPDLSRRFLPHCETKQLYGSVCDLRTSKLPGSSGLSKSMLDLTTSSQRFIQRHDSFSSVPSSSSSRKNSQGSNRSLDTITLSGDERDLGRLNVKLFYNSSAEQIWITVLQCRDISWPSSYGDTPTISIKGILTLSKPVHFKSSAKEGSNAIEFMETFVFAIKLQNLQAVRLAFKIQTQTPKKKTIGECSLSLRTLSTQEMEYSLEIIAPSKISVCQAELELGTCFQAVNSRIQLQILEAQYLPSSSTPLTLSFFVKVGMFSSGELIYKKKTRLLKASSGRVKWGETMIFPLIQTEKEIVFLIKLYSRSSVRRKHFVGQLWISEDSNNIEAVNQWKETITNPEKVVIKWHKLNPS.

Ser-82, Ser-155, Ser-167, Ser-173, and Ser-210 each carry phosphoserine. The segment at 189–214 is disordered; the sequence is DSFSSVPSSSSSRKNSQGSNRSLDTI. Residues 191 to 210 show a composition bias toward low complexity; sequence FSSVPSSSSSRKNSQGSNRS. Phosphothreonine is present on residues Thr-213 and Thr-215. Position 217 is a phosphoserine (Ser-217). C2 domains are found at residues 222–341 and 343–470; these read DLGR…SLEI and APSK…NQWK. A Nuclear localization signal motif is present at residues 446–448; sequence RRK.

It is found in the nucleus. This chain is Tandem C2 domains nuclear protein (Tc2n), found in Mus musculus (Mouse).